The chain runs to 471 residues: Alkaline phosphatase (471 aa).

The signal sequence occupies residues 1–21 (MKQSTIALALLPLLFTPVTKA). Asp73 provides a ligand contact to Mg(2+). Asp73 is a binding site for Zn(2+). Ser124 functions as the Phosphoserine intermediate in the catalytic mechanism. Mg(2+) is bound by residues Asp175 and Thr177. Cystine bridges form between Cys190–Cys200 and Cys308–Cys358. Mg(2+) is bound at residue Glu344. Zn(2+) is bound by residues Asp349, His353, Asp391, His392, and His434.

Belongs to the alkaline phosphatase family. In terms of assembly, isozymes 1 and 3 are a dimer of identical chains, isozyme 2 is a dimer of heterogeneous chains, one of each of the subunits from isozymes 1 and 3. Mg(2+) is required as a cofactor. It depends on Zn(2+) as a cofactor.

The protein resides in the periplasm. It catalyses the reaction a phosphate monoester + H2O = an alcohol + phosphate. The polypeptide is Alkaline phosphatase (phoA) (Escherichia coli (strain K12)).